A 508-amino-acid polypeptide reads, in one-letter code: Glycogen synthase (508 aa).

Lys15 contributes to the ADP-alpha-D-glucose binding site. The disordered stretch occupies residues 483–508 (ARNRAETRPQTASALSYREPRPAAEY).

Belongs to the glycosyltransferase 1 family. Bacterial/plant glycogen synthase subfamily.

It catalyses the reaction [(1-&gt;4)-alpha-D-glucosyl](n) + ADP-alpha-D-glucose = [(1-&gt;4)-alpha-D-glucosyl](n+1) + ADP + H(+). It participates in glycan biosynthesis; glycogen biosynthesis. Synthesizes alpha-1,4-glucan chains using ADP-glucose. The polypeptide is Glycogen synthase (Paracidovorax citrulli (strain AAC00-1) (Acidovorax citrulli)).